A 413-amino-acid chain; its full sequence is Tyrosine--tRNA ligase (413 aa).

The 'HIGH' region signature appears at 59–68; the sequence is PTAPDIHLGH. A 'KMSKS' region motif is present at residues 243–247; it reads KMSKS. Lys-246 contacts ATP. The region spanning 351-411 is the S4 RNA-binding domain; it reads LAIGQLLKQA…GKRRFARVTL (61 aa).

The protein belongs to the class-I aminoacyl-tRNA synthetase family. TyrS type 2 subfamily. Homodimer.

The protein resides in the cytoplasm. It carries out the reaction tRNA(Tyr) + L-tyrosine + ATP = L-tyrosyl-tRNA(Tyr) + AMP + diphosphate + H(+). Its function is as follows. Catalyzes the attachment of tyrosine to tRNA(Tyr) in a two-step reaction: tyrosine is first activated by ATP to form Tyr-AMP and then transferred to the acceptor end of tRNA(Tyr). This is Tyrosine--tRNA ligase from Burkholderia mallei (strain ATCC 23344).